A 129-amino-acid chain; its full sequence is Glycine cleavage system H protein (129 aa).

Residues 24-106 (LVRVGISAFA…HGEGWLLVLR (83 aa)) enclose the Lipoyl-binding domain. Lysine 65 is modified (N6-lipoyllysine).

Belongs to the GcvH family. In terms of assembly, the glycine cleavage system is composed of four proteins: P, T, L and H. Requires (R)-lipoate as cofactor.

The glycine cleavage system catalyzes the degradation of glycine. The H protein shuttles the methylamine group of glycine from the P protein to the T protein. This is Glycine cleavage system H protein from Parasynechococcus marenigrum (strain WH8102).